We begin with the raw amino-acid sequence, 164 residues long: S-ribosylhomocysteine lyase (164 aa).

Residues histidine 61, histidine 65, and cysteine 131 each contribute to the Fe cation site.

It belongs to the LuxS family. As to quaternary structure, homodimer. It depends on Fe cation as a cofactor.

It carries out the reaction S-(5-deoxy-D-ribos-5-yl)-L-homocysteine = (S)-4,5-dihydroxypentane-2,3-dione + L-homocysteine. Involved in the synthesis of autoinducer 2 (AI-2) which is secreted by bacteria and is used to communicate both the cell density and the metabolic potential of the environment. The regulation of gene expression in response to changes in cell density is called quorum sensing. Catalyzes the transformation of S-ribosylhomocysteine (RHC) to homocysteine (HC) and 4,5-dihydroxy-2,3-pentadione (DPD). This Bifidobacterium longum (strain DJO10A) protein is S-ribosylhomocysteine lyase.